The sequence spans 276 residues: uncharacterized protein (276 aa).

The propeptide at 1–4 (MNRG) is leader sequence. Met-5 carries the N-methylmethionine modification. A helical transmembrane segment spans residues 5 to 26 (MTLIELLVALALSIILSLGLYY).

It is found in the membrane. This is an uncharacterized protein from Aquifex aeolicus (strain VF5).